A 707-amino-acid polypeptide reads, in one-letter code: ATP-dependent zinc metalloprotease FtsH (707 aa).

The Cytoplasmic segment spans residues 1–25 (MSELDNKKDKSKDSNKKPKKPGAFS). The helical transmembrane segment at 26–46 (IGNIIIFVIVALLLIWVVFAF) threads the bilayer. Residues 47–128 (LPNNPGTNKS…GTTFTGLELA (82 aa)) are Extracellular-facing. Residues 129–149 (TLAIANTSASGIGTLNFSGLV) traverse the membrane as a helical segment. At 150-707 (TPTNQALAIL…IKTDESLDIK (558 aa)) the chain is on the cytoplasmic side. 246 to 253 (GPPGTGKT) is an ATP binding site. H468 is a binding site for Zn(2+). E469 is an active-site residue. Residues H472 and D546 each contribute to the Zn(2+) site.

This sequence in the central section; belongs to the AAA ATPase family. The protein in the C-terminal section; belongs to the peptidase M41 family. In terms of assembly, homohexamer. Zn(2+) is required as a cofactor.

Its subcellular location is the cell membrane. Functionally, acts as a processive, ATP-dependent zinc metallopeptidase for both cytoplasmic and membrane proteins. Plays a role in the quality control of integral membrane proteins. The chain is ATP-dependent zinc metalloprotease FtsH from Mycoplasma mobile (strain ATCC 43663 / 163K / NCTC 11711) (Mesomycoplasma mobile).